The sequence spans 354 residues: Probable L-ascorbate-6-phosphate lactonase UlaG (354 aa).

Belongs to the UlaG family. A divalent metal cation is required as a cofactor.

It localises to the cytoplasm. The catalysed reaction is L-ascorbate 6-phosphate + H2O = 3-dehydro-L-gulonate 6-phosphate. The protein operates within cofactor degradation; L-ascorbate degradation; D-xylulose 5-phosphate from L-ascorbate: step 1/4. Probably catalyzes the hydrolysis of L-ascorbate-6-P into 3-keto-L-gulonate-6-P. Is essential for L-ascorbate utilization under anaerobic conditions. The sequence is that of Probable L-ascorbate-6-phosphate lactonase UlaG from Escherichia coli O127:H6 (strain E2348/69 / EPEC).